A 209-amino-acid chain; its full sequence is Uracil phosphoribosyltransferase (209 aa).

5-phospho-alpha-D-ribose 1-diphosphate is bound by residues arginine 79, arginine 104, and aspartate 131 to serine 139. Uracil contacts are provided by residues isoleucine 194 and glycine 199–alanine 201. 5-phospho-alpha-D-ribose 1-diphosphate is bound at residue aspartate 200.

Belongs to the UPRTase family. Requires Mg(2+) as cofactor.

It carries out the reaction UMP + diphosphate = 5-phospho-alpha-D-ribose 1-diphosphate + uracil. It functions in the pathway pyrimidine metabolism; UMP biosynthesis via salvage pathway; UMP from uracil: step 1/1. With respect to regulation, allosterically activated by GTP. In terms of biological role, catalyzes the conversion of uracil and 5-phospho-alpha-D-ribose 1-diphosphate (PRPP) to UMP and diphosphate. The sequence is that of Uracil phosphoribosyltransferase from Macrococcus caseolyticus (strain JCSC5402) (Macrococcoides caseolyticum).